The sequence spans 1119 residues: Isoleucine--tRNA ligase (1119 aa).

The interval 1–43 is disordered; the sequence is MVPRRSRQRPASSCRTAKTARREMPYPLPAPDGQEPEAQPVTP. Positions 84-94 match the 'HIGH' region motif; the sequence is PFANGLPHYGH. A 'KMSKS' region motif is present at residues 676–680; sequence KVSKS. Lysine 679 contacts ATP.

The protein belongs to the class-I aminoacyl-tRNA synthetase family. IleS type 2 subfamily. Monomer. It depends on Zn(2+) as a cofactor.

Its subcellular location is the cytoplasm. The enzyme catalyses tRNA(Ile) + L-isoleucine + ATP = L-isoleucyl-tRNA(Ile) + AMP + diphosphate. In terms of biological role, catalyzes the attachment of isoleucine to tRNA(Ile). As IleRS can inadvertently accommodate and process structurally similar amino acids such as valine, to avoid such errors it has two additional distinct tRNA(Ile)-dependent editing activities. One activity is designated as 'pretransfer' editing and involves the hydrolysis of activated Val-AMP. The other activity is designated 'posttransfer' editing and involves deacylation of mischarged Val-tRNA(Ile). The protein is Isoleucine--tRNA ligase of Leifsonia xyli subsp. xyli (strain CTCB07).